The sequence spans 88 residues: Small ribosomal subunit protein uS15 (88 aa).

This sequence belongs to the universal ribosomal protein uS15 family. In terms of assembly, part of the 30S ribosomal subunit. Forms a bridge to the 50S subunit in the 70S ribosome, contacting the 23S rRNA.

Functionally, one of the primary rRNA binding proteins, it binds directly to 16S rRNA where it helps nucleate assembly of the platform of the 30S subunit by binding and bridging several RNA helices of the 16S rRNA. In terms of biological role, forms an intersubunit bridge (bridge B4) with the 23S rRNA of the 50S subunit in the ribosome. The polypeptide is Small ribosomal subunit protein uS15 (Halothermothrix orenii (strain H 168 / OCM 544 / DSM 9562)).